Consider the following 220-residue polypeptide: NADH-quinone oxidoreductase subunit I (220 aa).

4Fe-4S ferredoxin-type domains lie at 71–102 and 112–141; these read LQRLLDSGSERCIGCGLCEKICTSNCIRIITH and DSYTINLGRCIYCGLCAEVCPELAIVMGNR. Positions 82, 85, 88, 92, 121, 124, 127, and 131 each coordinate [4Fe-4S] cluster. The interval 187–220 is disordered; it reads MQATPLDYVQEPSKEESKEETPTNPESNKGDENV. Residues 198–207 show a composition bias toward basic and acidic residues; that stretch reads PSKEESKEET.

It belongs to the complex I 23 kDa subunit family. As to quaternary structure, NDH-1 is composed of 14 different subunits. Subunits NuoA, H, J, K, L, M, N constitute the membrane sector of the complex. [4Fe-4S] cluster is required as a cofactor.

Its subcellular location is the cell inner membrane. It catalyses the reaction a quinone + NADH + 5 H(+)(in) = a quinol + NAD(+) + 4 H(+)(out). NDH-1 shuttles electrons from NADH, via FMN and iron-sulfur (Fe-S) centers, to quinones in the respiratory chain. The immediate electron acceptor for the enzyme in this species is believed to be ubiquinone. Couples the redox reaction to proton translocation (for every two electrons transferred, four hydrogen ions are translocated across the cytoplasmic membrane), and thus conserves the redox energy in a proton gradient. The polypeptide is NADH-quinone oxidoreductase subunit I (Helicobacter pylori (strain Shi470)).